The primary structure comprises 387 residues: Small ribosomal subunit protein uS5m (387 aa).

A mitochondrion-targeting transit peptide spans 1–22; sequence MLRSFSHFLQIGSRRQPTYFRC. The interval 33–87 is disordered; the sequence is FKNDPKKELNSNLNEKSVEESSKNETKEQFNSSSIPRESESEGKTASNTSPLSPK. Positions 48–60 are enriched in basic and acidic residues; that stretch reads KSVEESSKNETKE. Residue Ser85 is modified to Phosphoserine. The region spanning 225 to 288 is the S5 DRBM domain; that stretch reads LMFVPLVRRR…GRAVKNMVYI (64 aa).

The protein belongs to the universal ribosomal protein uS5 family. In terms of assembly, component of the mitochondrial small ribosomal subunit (mt-SSU). Mature yeast 74S mitochondrial ribosomes consist of a small (37S) and a large (54S) subunit. The 37S small subunit contains a 15S ribosomal RNA (15S mt-rRNA) and at least 32 different proteins. The 54S large subunit contains a 21S rRNA (21S mt-rRNA) and at least 45 different proteins. uS3m, uS4m and uS5m form the narrow entry site of the mRNA channel.

Its subcellular location is the mitochondrion. Its function is as follows. Component of the mitochondrial ribosome (mitoribosome), a dedicated translation machinery responsible for the synthesis of mitochondrial genome-encoded proteins, including at least some of the essential transmembrane subunits of the mitochondrial respiratory chain. The mitoribosomes are attached to the mitochondrial inner membrane and translation products are cotranslationally integrated into the membrane. In Schizosaccharomyces pombe (strain 972 / ATCC 24843) (Fission yeast), this protein is Small ribosomal subunit protein uS5m (mrp5).